The sequence spans 668 residues: Protein PLASTID TRANSCRIPTIONALLY ACTIVE 10 (668 aa).

The transit peptide at 1–40 directs the protein to the chloroplast; it reads MQICQTKLNFTFPNPTNPNFCKPKALQWSPPRRISLLPCR. The region spanning 272 to 340 is the S1 motif domain; the sequence is GMVCEGTVTT…YRFRFPLELR (69 aa). A compositionally biased stretch (basic and acidic residues) spans 362-391; the sequence is RDGDTNPDEIRRDCGRPPEPRKDPGSKPEE. The interval 362 to 394 is disordered; the sequence is RDGDTNPDEIRRDCGRPPEPRKDPGSKPEEEGL. The residue at position 434 (Ser-434) is a Phosphoserine. Residues 611-668 form a disordered region; sequence KRKEGSTLASQEEETESEEEEEDDDDFDDFDYSILSDESSIGYSEQQPLVNGTQVLTD. Residues 621–641 are compositionally biased toward acidic residues; the sequence is QEEETESEEEEEDDDDFDDFD. Over residues 646–668 the composition is skewed to polar residues; sequence SDESSIGYSEQQPLVNGTQVLTD.

In terms of assembly, component of the transcriptionally active chromosome (TAC) complexes. Interacts with PTAC7.

The protein localises to the plastid. The protein resides in the chloroplast. The protein is Protein PLASTID TRANSCRIPTIONALLY ACTIVE 10 of Arabidopsis thaliana (Mouse-ear cress).